The chain runs to 286 residues: 3-hydroxybutyryl-CoA dehydrogenase (286 aa).

This sequence belongs to the 3-hydroxyacyl-CoA dehydrogenase family.

It carries out the reaction 3-hydroxybutanoyl-CoA + NAD(+) = acetoacetyl-CoA + NADH + H(+). The enzyme catalyses (3S)-3-hydroxybutanoyl-CoA + NADP(+) = acetoacetyl-CoA + NADPH + H(+). The protein operates within lipid metabolism; butanoate metabolism. This is 3-hydroxybutyryl-CoA dehydrogenase (fadB2) from Mycobacterium tuberculosis (strain CDC 1551 / Oshkosh).